The sequence spans 504 residues: Maturase K (504 aa).

This sequence belongs to the intron maturase 2 family. MatK subfamily.

The protein localises to the plastid. The protein resides in the chloroplast. Usually encoded in the trnK tRNA gene intron. Probably assists in splicing its own and other chloroplast group II introns. The polypeptide is Maturase K (Aucuba japonica (Japanese laurel)).